A 159-amino-acid chain; its full sequence is Major allergen Pyr c 1 (159 aa).

It belongs to the BetVI family.

This is Major allergen Pyr c 1 (PYRC1) from Pyrus communis (Pear).